Consider the following 291-residue polypeptide: Phosphate-binding protein PstS 2 (291 aa).

The signal sequence occupies residues 1-21 (MKFKKMLTLAAIGLSGFGLVA). C22 carries N-palmitoyl cysteine lipidation. A lipid anchor (S-diacylglycerol cysteine) is attached at C22.

It belongs to the PstS family. The complex is composed of two ATP-binding proteins (PstB), two transmembrane proteins (PstC and PstA) and a solute-binding protein (PstS).

Its subcellular location is the cell membrane. Its function is as follows. Part of the ABC transporter complex PstSACB involved in phosphate import. The chain is Phosphate-binding protein PstS 2 (pstS2) from Streptococcus pneumoniae serotype 4 (strain ATCC BAA-334 / TIGR4).